The following is a 66-amino-acid chain: DNA gyrase inhibitor YacG (66 aa).

Zn(2+) contacts are provided by cysteine 9, cysteine 12, cysteine 28, and cysteine 32.

This sequence belongs to the DNA gyrase inhibitor YacG family. Interacts with GyrB. Zn(2+) is required as a cofactor.

Its function is as follows. Inhibits all the catalytic activities of DNA gyrase by preventing its interaction with DNA. Acts by binding directly to the C-terminal domain of GyrB, which probably disrupts DNA binding by the gyrase. This chain is DNA gyrase inhibitor YacG, found in Pseudomonas aeruginosa (strain LESB58).